A 191-amino-acid chain; its full sequence is Molybdenum cofactor guanylyltransferase (191 aa).

Residues 13–15 (LAG), Lys26, Asp72, and Asp102 contribute to the GTP site. Asp102 serves as a coordination point for Mg(2+).

Belongs to the MobA family. Monomer. It depends on Mg(2+) as a cofactor.

It is found in the cytoplasm. It carries out the reaction Mo-molybdopterin + GTP + H(+) = Mo-molybdopterin guanine dinucleotide + diphosphate. In terms of biological role, transfers a GMP moiety from GTP to Mo-molybdopterin (Mo-MPT) cofactor (Moco or molybdenum cofactor) to form Mo-molybdopterin guanine dinucleotide (Mo-MGD) cofactor. The chain is Molybdenum cofactor guanylyltransferase from Pseudomonas putida (strain GB-1).